The chain runs to 331 residues: Tungstate uptake system ATP-binding protein TupC (331 aa).

The ABC transporter domain occupies 2–230 (IEISNLFFNY…NQGVKFCNFI (229 aa)). 34 to 41 (GANGSGKS) lines the ATP pocket.

The protein belongs to the ABC transporter superfamily. As to quaternary structure, the complex is composed of two ATP-binding proteins (TupC), two transmembrane proteins (TupB) and a solute-binding protein (TupA).

The catalysed reaction is tungstate(in) + ATP + H2O = tungstate(out) + ADP + phosphate + H(+). Part of an ABC transporter complex involved in ultra-high affinity tungstate uptake. Probably responsible for energy coupling to the transport system. This Campylobacter jejuni subsp. jejuni serotype O:2 (strain ATCC 700819 / NCTC 11168) protein is Tungstate uptake system ATP-binding protein TupC.